Consider the following 488-residue polypeptide: Glutamyl-tRNA(Gln) amidotransferase subunit A (488 aa).

Catalysis depends on charge relay system residues Lys-78 and Ser-153. The Acyl-ester intermediate role is filled by Ser-177.

The protein belongs to the amidase family. GatA subfamily. As to quaternary structure, heterotrimer of A, B and C subunits.

The catalysed reaction is L-glutamyl-tRNA(Gln) + L-glutamine + ATP + H2O = L-glutaminyl-tRNA(Gln) + L-glutamate + ADP + phosphate + H(+). Functionally, allows the formation of correctly charged Gln-tRNA(Gln) through the transamidation of misacylated Glu-tRNA(Gln) in organisms which lack glutaminyl-tRNA synthetase. The reaction takes place in the presence of glutamine and ATP through an activated gamma-phospho-Glu-tRNA(Gln). This Caldanaerobacter subterraneus subsp. tengcongensis (strain DSM 15242 / JCM 11007 / NBRC 100824 / MB4) (Thermoanaerobacter tengcongensis) protein is Glutamyl-tRNA(Gln) amidotransferase subunit A.